Reading from the N-terminus, the 907-residue chain is Collagen alpha-2(I) chain (907 aa).

2 disordered regions span residues 1-183 and 199-907; these read GPMG…GIPG and IPGP…PGPS. The span at 19-33 shows a compositional bias: basic and acidic residues; it reads AGEDGHPGKPGRERG. Composition is skewed to low complexity over residues 101 to 130, 155 to 169, and 206 to 221; these read VGAP…SAGP, AGPR…VSGP, and PGPV…RGIV. At asparagine 260 the chain carries Deamidated asparagine. Proline 272 is modified (4-hydroxyproline). Composition is skewed to low complexity over residues 272–281, 292–307, 340–362, 424–441, 453–475, 495–507, 535–555, and 566–581; these read PGIRGSRGIP, PPGS…VRGP, PAGI…RGEP, PGES…SRGP, EPGV…PGER, APGA…PAGA, VGPA…QPGA, and NGPV…AGPA. The span at 591–600 shows a compositional bias: gly residues; that stretch reads GSRGDGGPPG. 5 stretches are compositionally biased toward low complexity: residues 601–611, 664–691, 706–745, 756–766, and 783–804; these read ATGFPGAAGRT, EAGT…IPGS, EPGP…NPGN, NSGPVGAAGAP, and EPGP…PSGP. Residues 808–819 show a composition bias toward basic and acidic residues; that stretch reads RGDKGEPGDKGP. The span at 892 to 907 shows a compositional bias: pro residues; sequence AGPPGPPGPPGPPGPS.

This sequence belongs to the fibrillar collagen family. As to quaternary structure, trimers of one alpha 2(I) and two alpha 1(I) chains. Interacts (via C-terminus) with TMEM131 (via PapD-L domain); the interaction is direct and is involved in assembly and TRAPPIII ER-to-Golgi transport complex-dependent secretion of collagen. Post-translationally, prolines at the third position of the tripeptide repeating unit (G-X-Y) are hydroxylated in some or all of the chains. In terms of tissue distribution, forms the fibrils of tendon, ligaments and bones. In bones, the fibrils are mineralized with calcium hydroxyapatite.

The protein resides in the secreted. It localises to the extracellular space. Its subcellular location is the extracellular matrix. In terms of biological role, type I collagen is a member of group I collagen (fibrillar forming collagen). In Macrauchenia sp, this protein is Collagen alpha-2(I) chain.